The sequence spans 67 residues: Large ribosomal subunit protein eL24 (67 aa).

Zn(2+) is bound by residues C7, C10, C33, and C37. The C4-type zinc finger occupies 7–37 (CSYCGKEFEPGTGKMYVRNDGRVYFFCSRKC).

It belongs to the eukaryotic ribosomal protein eL24 family. As to quaternary structure, part of the 50S ribosomal subunit. Forms a cluster with proteins L3 and L14. Zn(2+) is required as a cofactor.

Its function is as follows. Binds to the 23S rRNA. The protein is Large ribosomal subunit protein eL24 of Thermococcus sibiricus (strain DSM 12597 / MM 739).